The following is a 185-amino-acid chain: Ribosome-recycling factor (185 aa).

This sequence belongs to the RRF family.

The protein resides in the cytoplasm. Functionally, responsible for the release of ribosomes from messenger RNA at the termination of protein biosynthesis. May increase the efficiency of translation by recycling ribosomes from one round of translation to another. This Francisella philomiragia subsp. philomiragia (strain ATCC 25017 / CCUG 19701 / FSC 153 / O#319-036) protein is Ribosome-recycling factor.